A 605-amino-acid chain; its full sequence is Ubiquitin carboxyl-terminal hydrolase 2 (605 aa).

The interval methionine 1–glutamate 200 is necessary for interaction with MDM4. Disordered regions lie at residues leucine 71–leucine 107 and tryptophan 237–glutamine 264. A compositionally biased stretch (basic and acidic residues) spans lysine 90–glutamate 100. The segment covering proline 245–arginine 255 has biased composition (low complexity). The 333-residue stretch at alanine 267–alanine 599 folds into the USP domain. Catalysis depends on cysteine 276, which acts as the Nucleophile. The necessary for interaction with MDM4 stretch occupies residues tyrosine 403–lysine 503. Cysteine 425, cysteine 428, cysteine 476, and cysteine 479 together coordinate Zn(2+). Histidine 557 serves as the catalytic Proton acceptor.

Belongs to the peptidase C19 family. USP2 subfamily. Homooligomer. Found in trimeric complex with MDM2 and MDM4 and USP2. Interacts with CCND1; the interaction is direct and promotes its stabilization by antagonizing ubiquitin-dependent degradation. Interacts (via N-terminus and C-terminus) with MDM2. Interacts with MDM4. Interacts with PER1. Interacts with KCNQ1; counteracts the NEDD4L-specific down-regulation of I(Ks) and restore plasma membrane localization of KCNQ1. Isoform 4: Interacts with NHERF4 and CLTC. In terms of tissue distribution, expressed in mesangial cells of the kidney and in different types of glomerulonephritides (at protein level).

The protein resides in the cytoplasm. It localises to the perinuclear region. The protein localises to the nucleus. It is found in the membrane. It catalyses the reaction Thiol-dependent hydrolysis of ester, thioester, amide, peptide and isopeptide bonds formed by the C-terminal Gly of ubiquitin (a 76-residue protein attached to proteins as an intracellular targeting signal).. Its activity is regulated as follows. Cleavage is inhibited by ubiquitin in a dosage-dependent manner. Cleavage is blocked by ubiquitin aldehyde. In terms of biological role, hydrolase that deubiquitinates polyubiquitinated target proteins such as MDM2, MDM4 and CCND1. Isoform 1 and isoform 4 possess both ubiquitin-specific peptidase and isopeptidase activities. Deubiquitinates MDM2 without reversing MDM2-mediated p53/TP53 ubiquitination and thus indirectly promotes p53/TP53 degradation and limits p53 activity. Has no deubiquitinase activity against p53/TP53. Prevents MDM2-mediated degradation of MDM4. Plays a role in the G1/S cell-cycle progression in normal and cancer cells. Regulates the circadian clock by modulating its intrinsic circadian rhythm and its capacity to respond to external cues. Associates with clock proteins and deubiquitinates core clock component PER1 but does not affect its overall stability. Regulates the nucleocytoplasmic shuttling and nuclear retention of PER1 and its repressive role on the clock transcription factors CLOCK and BMAL1. Plays a role in the regulation of myogenic differentiation of embryonic muscle cells. Its function is as follows. Circadian clock output effector that regulates Ca(2+) absorption in the small intestine. Probably functions by regulating protein levels of the membrane scaffold protein NHERF4 in a rhythmic manner, and is therefore likely to control Ca(2+) membrane permeability mediated by the Ca(2+) channel TRPV6 in the intestine. The polypeptide is Ubiquitin carboxyl-terminal hydrolase 2 (USP2) (Homo sapiens (Human)).